An 807-amino-acid polypeptide reads, in one-letter code: Mechanosensitive cation channel TMEM63A (807 aa).

Topologically, residues 1–51 (MTDSPFLELWQSRAVSVREQLGLGDRPNDSYCYNSAKNSTVLQGVTFGGIP) are extracellular. A glycan (N-linked (GlcNAc...) asparagine) is linked at N38. The chain crosses the membrane as a helical span at residues 52 to 74 (TVLLIDVSCFLFLILVFSIIRRR). The Cytoplasmic segment spans residues 75–134 (FWDYGRIALVSEADSEPRFQRLSSTSSSGQQDFENELGCCPWLTAIFRLHDDQILEWCGE). Residues 135 to 167 (DAIHYLSFQRHIIFLLVVVSFLSLCVILPVNLS) form a helical membrane-spanning segment. Topologically, residues 168-191 (GDLLDKDPYSFGRTTIANLQTDND) are extracellular. The helical transmembrane segment at 192-217 (LLWLHTIFAVIYLFLTVGFMRHHTQS) threads the bilayer. Over 218–416 (IKYKEENLVR…CWKNLSIQGL (199 aa)) the chain is Cytoplasmic. The intracellular linker IL2; confers mechanosensitivity stretch occupies residues 219–414 (KYKEENLVRR…DICWKNLSIQ (196 aa)). A helical transmembrane segment spans residues 417–444 (RWWLQWLGINFTLFLGLFFLTTPSIILS). Residues 445–462 (TMDKFNVTKPIHALNNPI) lie on the Extracellular side of the membrane. Residue N450 is glycosylated (N-linked (GlcNAc...) asparagine). The helical transmembrane segment at 463–490 (ISQFFPTLLLWSFSALLPSIVYYSTLLE) threads the bilayer. The Cytoplasmic segment spans residues 491–495 (SHWTK). Residues 496–532 (SGENQIMMTKVYIFLIFMVLILPSLGLTSLDFFFRWL) form a helical membrane-spanning segment. Topologically, residues 533-554 (FDKTSSEASIRLECVFLPDQGA) are extracellular. The chain crosses the membrane as a helical span at residues 555-586 (FFVNYVIASAFIGNGMELLRLPGLILYTFRMI). The interval 555 to 586 (FFVNYVIASAFIGNGMELLRLPGLILYTFRMI) is gating helix. Topologically, residues 587 to 606 (MAKTAADRRNVKQNQAFQYE) are cytoplasmic. Residues 607–624 (FGAMYAWMLCVFTVIMAY) form a helical membrane-spanning segment. Over 625 to 628 (SITC) the chain is Extracellular. Residues 629–651 (PIIAPFGLIYILLKHMVDRHNLY) form a helical membrane-spanning segment. The Cytoplasmic segment spans residues 652-661 (FIYLPAKLEK). The chain crosses the membrane as a helical span at residues 662–689 (GIHFAAVNQALAAPILCLFWLYFFSFLR). The Extracellular portion of the chain corresponds to 690-694 (LGMKA). The chain crosses the membrane as a helical span at residues 695-709 (PATLFTFLVVLLTIL). Topologically, residues 710–807 (VCLAHTCFGY…GSVAAAPQEA (98 aa)) are cytoplasmic. The residue at position 739 (S739) is a Phosphoserine.

It belongs to the CSC1 (TC 1.A.17) family. In terms of assembly, monomer. In terms of processing, N-Glycosylated.

It is found in the lysosome membrane. Its subcellular location is the early endosome membrane. It localises to the cell membrane. It carries out the reaction Ca(2+)(in) = Ca(2+)(out). Its function is as follows. Mechanosensitive cation channel with low conductance and high activation threshold. In contrast to TMEM63B, does not show phospholipid scramblase activity. Acts as a regulator of lysosomal morphology by mediating lysosomal mechanosensitivity. Important for the baby's first breath and respiration throughout life. Upon lung inflation conducts cation currents in alveolar type 1 and 2 cells triggering lamellar body exocytosis and surfactant secretion into airspace. Also acts as an osmosensitive cation channel preferentially activated by hypotonic stress. In Pongo abelii (Sumatran orangutan), this protein is Mechanosensitive cation channel TMEM63A (TMEM63A).